The primary structure comprises 146 residues: 3-dehydroquinate dehydratase (146 aa).

Catalysis depends on tyrosine 22, which acts as the Proton acceptor. Positions 73, 79, and 86 each coordinate substrate. The active-site Proton donor is histidine 99. Residues 100–101 and arginine 110 each bind substrate; that span reads VS.

The protein belongs to the type-II 3-dehydroquinase family. Homododecamer.

It carries out the reaction 3-dehydroquinate = 3-dehydroshikimate + H2O. It functions in the pathway metabolic intermediate biosynthesis; chorismate biosynthesis; chorismate from D-erythrose 4-phosphate and phosphoenolpyruvate: step 3/7. Catalyzes a trans-dehydration via an enolate intermediate. The sequence is that of 3-dehydroquinate dehydratase from Kineococcus radiotolerans (strain ATCC BAA-149 / DSM 14245 / SRS30216).